The following is a 1492-amino-acid chain: MAAEREAGRLLCTSSSRRCCPPPPLLLLLPLLLLLGRPASGAAATKSGSPPQSAGASVRTFTPFYFLVEPVDTLSVRGSSVILNCSAYSEPSPNIEWKKDGTFLNLESDDRRQLLPDGSLFISNVVHSKHNKPDEGFYQCVATVDNLGTIVSRTAKLTVAGLPRFTSQPEPSSVYVGNSAILNCEVNADLVPFVRWEQNRQPLLLDDRIVKLPSGTLVISNATEGDGGLYRCIVESGGPPKFSDEAELKVLQDPEEIVDLVFLMRPSSMMKVTGQSAVLPCVVSGLPAPVVRWMKNEEVLDTESSGRLVLLAGGCLEISDVTEDDAGTYFCIADNGNKTVEAQAELTVQVPPGFLKQPANIYAHESMDIVFECEVTGKPTPTVKWVKNGDVVIPSDYFKIVKEHNLQVLGLVKSDEGFYQCIAENDVGNAQAGAQLIILEHDVAIPTLPPTSLTSATTDHLAPATTGPLPSAPRDVVASLVSTRFIKLTWRTPASDPHGDNLTYSVFYTKEGVARERVENTSQPGEMQVTIQNLMPATVYIFKVMAQNKHGSGESSAPLRVETQPEVQLPGPAPNIRAYATSPTSITVTWETPLSGNGEIQNYKLYYMEKGTDKEQDIDVSSHSYTINGLKKYTEYSFRVVAYNKHGPGVSTQDVAVRTLSDVPSAAPQNLSLEVRNSKSIVIHWQPPSSTTQNGQITGYKIRYRKASRKSDVTETLVTGTQLSQLIEGLDRGTEYNFRVAALTVNGTGPATDWLSAETFESDLDETRVPEVPSSLHVRPLVTSIVVSWTPPENQNIVVRGYAIGYGIGSPHAQTIKVDYKQRYYTIENLDPSSHYVITLKAFNNVGEGIPLYESAVTRPHTDTSEVDLFVINAPYTPVPDPTPMMPPVGVQASILSHDTIRITWADNSLPKHQKITDSRYYTVRWKTNIPANTKYKNANATTLSYLVTGLKPNTLYEFSVMVTKGRRSSTWSMTAHGATFELVPTSPPKDVTVVSKEGKPRTIIVNWQPPSEANGKITGYIIYYSTDVNAEIHDWVIEPVVGNRLTHQIQELTLDTPYYFKIQARNSKGMGPMSEAVQFRTPKADSSDKMPNDQALGSAGKGSRLPDLGSDYKPPMSGSNSPHGSPTSPLDSNMLLVIIVSVGVITIVVVVVIAVFCTRRTTSHQKKKRAACKSVNGSHKYKGNCKDVKPPDLWIHHERLELKPIDKSPDPNPVMTDTPIPRNSQDITPVDNSMDSNIHQRRNSYRGHESEDSMSTLAGRRGMRPKMMMPFDSQPPQPVISAHPIHSLDNPHHHFHSSSLASPARSHLYHPSSPWPIGTSMSLSDRANSTESVRNTPSTDTMPASSSQTCCTDHQDPEGATSSSYLASSQEEDSGQSLPTAHVRPSHPLKSFAVPAIPPPGPPLYDPALPSTPLLSQQALNHHIHSVKTASIGTLGRSRPPMPVVVPSAPEVQETTRMLEDSESSYEPDELTKEMAHLEGLMKDLNAITTA.

A signal peptide spans 1 to 36; that stretch reads MAAEREAGRLLCTSSSRRCCPPPPLLLLLPLLLLLG. The Extracellular segment spans residues 37-1136; that stretch reads RPASGAAATK…PTSPLDSNML (1100 aa). 4 Ig-like C2-type domains span residues 63–158, 163–249, 254–347, and 352–437; these read PFYF…AKLT, PRFT…AELK, PEEI…AELT, and PGFL…AQLI. N-linked (GlcNAc...) asparagine glycosylation occurs at N84. Disulfide bonds link C85–C140, C184–C232, and C281–C331. N-linked (GlcNAc...) asparagine glycosylation is present at N221. An N-linked (GlcNAc...) asparagine glycan is attached at N337. A disulfide bridge links C373 with C421. Fibronectin type-III domains are found at residues 472 to 566, 572 to 662, 667 to 762, 772 to 862, 887 to 986, and 988 to 1085; these read APRD…TQPE, PAPN…TLSD, APQN…TFES, VPSS…RPHT, PPVG…LVPT, and PPKD…TPKA. N501 and N520 each carry an N-linked (GlcNAc...) asparagine glycan. N670 and N746 each carry an N-linked (GlcNAc...) asparagine glycan. The N-linked (GlcNAc...) asparagine glycan is linked to N940. Positions 1072-1128 are disordered; the sequence is GPMSEAVQFRTPKADSSDKMPNDQALGSAGKGSRLPDLGSDYKPPMSGSNSPHGSPT. Over residues 1083–1092 the composition is skewed to basic and acidic residues; it reads PKADSSDKMP. Residues 1118–1128 are compositionally biased toward polar residues; sequence SGSNSPHGSPT. Residues 1137-1157 traverse the membrane as a helical segment; that stretch reads LVIIVSVGVITIVVVVVIAVF. Residues 1158 to 1492 are Cytoplasmic-facing; the sequence is CTRRTTSHQK…MKDLNAITTA (335 aa). Disordered regions lie at residues 1205–1237, 1266–1300, and 1321–1396; these read PIDK…SMDS, PKMM…HSSS, and SMSL…FAVP. Phosphoserine occurs at positions 1209 and 1225. A compositionally biased stretch (polar residues) spans 1222-1237; that stretch reads PRNSQDITPVDNSMDS. At T1229 the chain carries Phosphothreonine. Polar residues-rich tracts occupy residues 1321–1353 and 1361–1380; these read SMSL…TCCT and ATSS…QSLP. Phosphoserine is present on S1432. Residue T1435 is modified to Phosphothreonine. Phosphoserine is present on residues S1463, S1465, and S1466.

This sequence belongs to the immunoglobulin superfamily. DCC family. Interacts with BMP2, BMP4, BMP6, and BMP7. Interacts with RGMA and RGMB. Interacts with MYO10. As to expression, widely expressed.

It is found in the cell membrane. Multi-functional cell surface receptor regulating cell adhesion in many diverse developmental processes, including neural tube and mammary gland formation, myogenesis and angiogenesis. Receptor for members of the BMP, netrin, and repulsive guidance molecule (RGM) families. Netrin-Neogenin interactions result in a chemoattractive axon guidance response and cell-cell adhesion, the interaction between NEO1/Neogenin and RGMa and RGMb induces a chemorepulsive response. The sequence is that of Neogenin from Mus musculus (Mouse).